Consider the following 605-residue polypeptide: Inactive LRR receptor-like serine/threonine-protein kinase BIR2 (605 aa).

A signal peptide spans 1 to 28; that stretch reads MKEIGSKPRKLLPLCFIIFLCFCSSVMA. Residues 29–229 lie on the Extracellular side of the membrane; the sequence is ADEDDIRCLR…CGGLSKKNLG (201 aa). A glycan (N-linked (GlcNAc...) asparagine) is linked at asparagine 58. 4 LRR repeats span residues 101-125, 127-150, 152-173, and 174-197; these read CASL…LCNW, PFLV…LAKC, FVNS…QFSA, and LGRL…FFSS. The helical transmembrane segment at 230–250 threads the bilayer; the sequence is IIIAAGVFGAAASMLLAFGIW. Residues 251–605 are Cytoplasmic-facing; the sequence is WYYHLKWTRR…IFDTQENEKV (355 aa). A Phosphoserine; by BAK1 modification is found at serine 271. Phosphothreonine; by BAK1 is present on threonine 283. Phosphoserine; by BAK1 is present on serine 286. At threonine 304 the chain carries Phosphothreonine; by BAK1. The Protein kinase domain occupies 307–578; it reads FNSENIIVST…FQAYQSLKAI (272 aa). 313-321 lines the ATP pocket; it reads IVSTRTGTT. At serine 330 the chain carries Phosphoserine; by BAK1. Lysine 335 lines the ATP pocket. Position 389 is a phosphoserine; by BAK1 (serine 389). Threonine 402 is subject to Phosphothreonine. Phosphoserine; by BAK1 occurs at positions 448 and 462. A Phosphothreonine; by BAK1 modification is found at threonine 466. Tyrosine 479 is subject to Phosphotyrosine. The residue at position 482 (threonine 482) is a Phosphothreonine. Serine 486 is modified (phosphoserine). Threonine 533 is subject to Phosphothreonine; by BAK1.

This sequence belongs to the protein kinase superfamily. Ser/Thr protein kinase family. Interacts constitutively with BAK1, when phosphorylated, thereby preventing interaction with the ligand-binding LRR-RLK FLS2. Upon infection, pathogen-associated molecular patterns (PAMP) perception leads to BIR2 release from the BAK1 complex and enables the recruitment of BAK1 into the FLS2 complex. Phosphorylated by BAK1, this interacts promotes interaction with BAK1.

The protein resides in the cell membrane. Its function is as follows. Pseudokinases lacking protein kinase activity and unable to bind ATP-analogs. Negative regulator of pathogen-associated molecular patterns- (PAMP-) triggered immunity by limiting BAK1-receptor complex formation in the absence of ligands. This chain is Inactive LRR receptor-like serine/threonine-protein kinase BIR2, found in Arabidopsis thaliana (Mouse-ear cress).